Consider the following 174-residue polypeptide: Repair DNA polymerase X (174 aa).

Residues 42 to 51 (REEKMLNDVD) form an involved in ssDNA binding region. Mg(2+) contacts are provided by D49 and D51. Cysteines 81 and 86 form a disulfide. Residue D100 participates in Mg(2+) binding.

Belongs to the DNA polymerase type-X family. Mg(2+) serves as cofactor.

It localises to the virion. It catalyses the reaction DNA(n) + a 2'-deoxyribonucleoside 5'-triphosphate = DNA(n+1) + diphosphate. Its function is as follows. Error-prone polymerase lacking a proofreading 3'-5' exonuclease which catalyzes the gap-filling reaction during the DNA repair process. Specifically binds intermediates in the single-nucleotide base-excision repair process. Also catalyzes DNA polymerization with low nucleotide-insertion fidelity. Probably acts as a strategic DNA mutase, which gives rise to a rapid emergence of variants. Generates mismatched G-G pairs, in that case, the polymerase first binds the deoxynucleotide followed by mismatch formation. Together with the viral DNA ligase, fills the single nucleotide gaps generated by the AP endonuclease. Binds DNA with high affinity via the helix alphaE. This chain is Repair DNA polymerase X, found in Ornithodoros (relapsing fever ticks).